A 204-amino-acid chain; its full sequence is Small ribosomal subunit protein uS4 (204 aa).

Residues 25–45 (AVPSRRAYPPGQHGQARKKRS) form a disordered region. The region spanning 92 to 152 (MRLDNIIFRL…NKENSRRLAE (61 aa)) is the S4 RNA-binding domain.

The protein belongs to the universal ribosomal protein uS4 family. In terms of assembly, part of the 30S ribosomal subunit. Contacts protein S5. The interaction surface between S4 and S5 is involved in control of translational fidelity.

One of the primary rRNA binding proteins, it binds directly to 16S rRNA where it nucleates assembly of the body of the 30S subunit. In terms of biological role, with S5 and S12 plays an important role in translational accuracy. This Cyanothece sp. (strain PCC 7425 / ATCC 29141) protein is Small ribosomal subunit protein uS4.